A 197-amino-acid polypeptide reads, in one-letter code: 7-methyl-GTP pyrophosphatase (197 aa).

The active-site Proton acceptor is aspartate 74.

The protein belongs to the Maf family. YceF subfamily. The cofactor is a divalent metal cation.

Its subcellular location is the cytoplasm. It carries out the reaction N(7)-methyl-GTP + H2O = N(7)-methyl-GMP + diphosphate + H(+). Nucleoside triphosphate pyrophosphatase that hydrolyzes 7-methyl-GTP (m(7)GTP). May have a dual role in cell division arrest and in preventing the incorporation of modified nucleotides into cellular nucleic acids. This Saccharophagus degradans (strain 2-40 / ATCC 43961 / DSM 17024) protein is 7-methyl-GTP pyrophosphatase.